The following is a 235-amino-acid chain: Purine nucleoside phosphorylase DeoD-type (235 aa).

H4 is an a purine D-ribonucleoside binding site. Phosphate is bound by residues G20, R24, R43, and 87–90 (RVGT). A purine D-ribonucleoside contacts are provided by residues E162, 179 to 181 (EME), and 203 to 204 (SD). The active-site Proton donor is the D204.

It belongs to the PNP/UDP phosphorylase family. As to quaternary structure, homohexamer; trimer of homodimers.

It carries out the reaction a purine D-ribonucleoside + phosphate = a purine nucleobase + alpha-D-ribose 1-phosphate. It catalyses the reaction a purine 2'-deoxy-D-ribonucleoside + phosphate = a purine nucleobase + 2-deoxy-alpha-D-ribose 1-phosphate. Catalyzes the reversible phosphorolytic breakdown of the N-glycosidic bond in the beta-(deoxy)ribonucleoside molecules, with the formation of the corresponding free purine bases and pentose-1-phosphate. The protein is Purine nucleoside phosphorylase DeoD-type of Bacillus cereus (strain ZK / E33L).